The primary structure comprises 306 residues: Porphobilinogen deaminase (306 aa).

S-(dipyrrolylmethanemethyl)cysteine is present on C239.

It belongs to the HMBS family. As to quaternary structure, monomer. The cofactor is dipyrromethane.

It catalyses the reaction 4 porphobilinogen + H2O = hydroxymethylbilane + 4 NH4(+). The protein operates within porphyrin-containing compound metabolism; protoporphyrin-IX biosynthesis; coproporphyrinogen-III from 5-aminolevulinate: step 2/4. Functionally, tetrapolymerization of the monopyrrole PBG into the hydroxymethylbilane pre-uroporphyrinogen in several discrete steps. The sequence is that of Porphobilinogen deaminase (hemC) from Helicobacter pylori (strain ATCC 700392 / 26695) (Campylobacter pylori).